The following is a 387-amino-acid chain: Beta-carotene 4-ketolase (387 aa).

A disordered region spans residues 1-78; that stretch reads MPHSIDMEDS…GNPTVDDASQ (78 aa). Polar residues-rich tracts occupy residues 43-53 and 65-78; these read NWQTQYHSSEG and DATT…DASQ.

The enzyme catalyses echinenone + 2 AH2 + 2 O2 = canthaxanthin + 2 A + 3 H2O. The catalysed reaction is all-trans-beta-carotene + 2 AH2 + 2 O2 = echinenone + 2 A + 3 H2O. Its pathway is carotenoid biosynthesis. Its function is as follows. Involved in the biosynthesis of ketocarotenoids which are powerful anti-oxidative molecules. Catalyzes the conversion of beta-carotene to canthaxanthin via echinenone. The polypeptide is Beta-carotene 4-ketolase (Protosiphon botryoides (Green alga)).